The chain runs to 130 residues: Small ribosomal subunit protein uS9 (130 aa).

It belongs to the universal ribosomal protein uS9 family.

In Delftia acidovorans (strain DSM 14801 / SPH-1), this protein is Small ribosomal subunit protein uS9.